A 216-amino-acid chain; its full sequence is Adenylate kinase (216 aa).

10 to 15 contacts ATP; the sequence is GAGKGT. The tract at residues 30–59 is NMP; sequence STGDIFRKNISNKTPLGMEAKSYMDKGQLV. AMP is bound by residues Thr-31, Arg-36, 57–59, 85–88, and Gln-92; these read QLV and GFPR. The interval 126-163 is LID; sequence GRRVCGECGASYHIKFITPKTEGVCDLCGGKLVQRKDD. Position 127 (Arg-127) interacts with ATP. Residues Cys-130 and Cys-133 each contribute to the Zn(2+) site. 136 to 137 provides a ligand contact to ATP; that stretch reads SY. Positions 150 and 153 each coordinate Zn(2+). Arg-160 and Arg-171 together coordinate AMP. Lys-199 provides a ligand contact to ATP.

Belongs to the adenylate kinase family. As to quaternary structure, monomer.

It localises to the cytoplasm. It catalyses the reaction AMP + ATP = 2 ADP. Its pathway is purine metabolism; AMP biosynthesis via salvage pathway; AMP from ADP: step 1/1. In terms of biological role, catalyzes the reversible transfer of the terminal phosphate group between ATP and AMP. Plays an important role in cellular energy homeostasis and in adenine nucleotide metabolism. In Clostridium tetani (strain Massachusetts / E88), this protein is Adenylate kinase.